Here is a 214-residue protein sequence, read N- to C-terminus: rRNA N(6)-adenosine-methyltransferase metl-5 (214 aa).

S-adenosyl-L-methionine-binding positions include glutamine 25, threonine 28, glycine 55, cysteine 58, aspartate 78, and 106-107 (DI).

The protein belongs to the methyltransferase superfamily. PrmA family. As to quaternary structure, heterodimer; heterodimerizes with TRMT112/C04H5.1.

The enzyme catalyses adenosine in rRNA + S-adenosyl-L-methionine = N(6)-methyladenosine in rRNA + S-adenosyl-L-homocysteine + H(+). Its function is as follows. Catalytic subunit of a heterodimer with TRMT112/C04H5.1, which specifically methylates the 6th position of adenine in position 1717 of 18S rRNA. The sequence is that of rRNA N(6)-adenosine-methyltransferase metl-5 from Caenorhabditis elegans.